Reading from the N-terminus, the 144-residue chain is Maximins 2/H8 type 2 (144 aa).

The first 18 residues, 1–18 (MNFKYIVAVSFLIASAYA), serve as a signal peptide directing secretion. Positions 19–43 (RSEENEIQSLSQRDVLEEESLREIR) are excised as a propeptide. Asn-70 carries the post-translational modification Asparagine amide. Positions 74–123 (TAEEHEVMKRLETVMRDLDSLDYPEEASERETRGFNQEEIANLFTKKEKR) are excised as a propeptide. An Isoleucine amide modification is found at Ile-143.

Belongs to the bombinin family. As to expression, expressed by the skin glands.

The protein resides in the secreted. In terms of biological role, maximin-2 shows antibacterial activity against both Gram-positive and Gram-negative bacteria. It also shows antimicrobial activity against the fungus C.albicans, but not against A.flavus nor P.uticale. It has little hemolytic activity. Functionally, maximin-H8 shows antimicrobial activity against bacteria and against the fungus C.albicans. Shows strong hemolytic activity. This chain is Maximins 2/H8 type 2, found in Bombina maxima (Giant fire-bellied toad).